The following is a 234-amino-acid chain: MRLVQLSRHSIAFPSPEGALREPNGLLALGGDLSPARLLMAYQRGIFPWFSPGDPILWWSPDPRAVLWPEQFHLSRSMKRFHQRSPYRVTLNHAFGEVIEGCASDRDEGTWITSSIVRAYHQLHELGHAHSIEVWQENTLVGGMYGVAQGALFCGESMFSRAENASKTALLVFCQAFTQSGGKLIDCQVLNNHTASLGAVDIPRRDYLDYLSVLRGYRLPELFWVPRVLFPGAQ.

It belongs to the L/F-transferase family.

It localises to the cytoplasm. It carries out the reaction N-terminal L-lysyl-[protein] + L-leucyl-tRNA(Leu) = N-terminal L-leucyl-L-lysyl-[protein] + tRNA(Leu) + H(+). The catalysed reaction is N-terminal L-arginyl-[protein] + L-leucyl-tRNA(Leu) = N-terminal L-leucyl-L-arginyl-[protein] + tRNA(Leu) + H(+). The enzyme catalyses L-phenylalanyl-tRNA(Phe) + an N-terminal L-alpha-aminoacyl-[protein] = an N-terminal L-phenylalanyl-L-alpha-aminoacyl-[protein] + tRNA(Phe). Functionally, functions in the N-end rule pathway of protein degradation where it conjugates Leu, Phe and, less efficiently, Met from aminoacyl-tRNAs to the N-termini of proteins containing an N-terminal arginine or lysine. The chain is Leucyl/phenylalanyl-tRNA--protein transferase from Klebsiella pneumoniae (strain 342).